The sequence spans 937 residues: AP-2 complex subunit beta (937 aa).

Thr-2 is subject to N-acetylthreonine. A Phosphoserine modification is found at Ser-4. Lys-265 carries the post-translational modification N6-acetyllysine. A Phosphotyrosine; by SRC modification is found at Tyr-737. The tract at residues 841 to 937 (WKDIPNENEL…YQVYDSILKN (97 aa)) is interaction with ARRB1. A Phosphotyrosine modification is found at Tyr-928.

This sequence belongs to the adaptor complexes large subunit family. Adaptor protein complex 2 (AP-2) is a heterotetramer composed of two large adaptins (alpha-type subunit AP2A1 or AP2A2 and beta-type subunit AP2B1), a medium adaptin (mu-type subunit AP2M1) and a small adaptin (sigma-type subunit AP2S1). Interacts with EPN1. Interacts with EPS15; clathrin competes with EPS15. Interacts with SNAP91; clathrin competes with SNAP91. Interacts with CLTC; clathrin competes with EPS15, SNAP91 and PIP5K1C. Interacts with LDLRAP1. Interacts with AMPH and BIN1. Interacts with ARF6 (GDP-bound). Interacts (dephosphorylated at Tyr-737) with ARRB1; phosphorylation of AP2B1 at Tyr-737 disrupts the interaction. Interacts with SLC2A8. Interacts with SCYL1 and SCYL2. Interacts with TGFBR1 and TGFBR2. Interacts with PIP5K1C; clathrin competes with PIP5K1C. Interacts with DENND1B, but not with DENND1A, nor DENND1C. Interacts with FCHO1. Interacts with RFTN1. Interacts with KIAA1107. Together with AP2A1 or AP2A2 and AP2M1, it interacts with ADAM10; this interaction facilitates ADAM10 endocytosis from the plasma membrane during long-term potentiation in hippocampal neurons. Phosphorylation at Tyr-737 by SRC occurs at the plasma membrane in clathrin-coated vesicles (CCVs). Expressed in the brain (at protein level).

The protein localises to the cell membrane. It localises to the membrane. Its subcellular location is the coated pit. In terms of biological role, component of the adaptor protein complex 2 (AP-2). Adaptor protein complexes function in protein transport via transport vesicles in different membrane traffic pathways. Adaptor protein complexes are vesicle coat components and appear to be involved in cargo selection and vesicle formation. AP-2 is involved in clathrin-dependent endocytosis in which cargo proteins are incorporated into vesicles surrounded by clathrin (clathrin-coated vesicles, CCVs) which are destined for fusion with the early endosome. The clathrin lattice serves as a mechanical scaffold but is itself unable to bind directly to membrane components. Clathrin-associated adaptor protein (AP) complexes which can bind directly to both the clathrin lattice and to the lipid and protein components of membranes are considered to be the major clathrin adaptors contributing the CCV formation. AP-2 also serves as a cargo receptor to selectively sort the membrane proteins involved in receptor-mediated endocytosis. AP-2 seems to play a role in the recycling of synaptic vesicle membranes from the presynaptic surface. AP-2 recognizes Y-X-X-[FILMV] (Y-X-X-Phi) and [ED]-X-X-X-L-[LI] endocytosis signal motifs within the cytosolic tails of transmembrane cargo molecules. AP-2 may also play a role in maintaining normal post-endocytic trafficking through the ARF6-regulated, non-clathrin pathway. During long-term potentiation in hippocampal neurons, AP-2 is responsible for the endocytosis of ADAM10. The AP-2 beta subunit acts via its C-terminal appendage domain as a scaffolding platform for endocytic accessory proteins; at least some clathrin-associated sorting proteins (CLASPs) are recognized by their [DE]-X(1,2)-F-X-X-[FL]-X-X-X-R motif. The AP-2 beta subunit binds to clathrin heavy chain, promoting clathrin lattice assembly; clathrin displaces at least some CLASPs from AP2B1 which probably then can be positioned for further coat assembly. The chain is AP-2 complex subunit beta (AP2B1) from Homo sapiens (Human).